The chain runs to 160 residues: Large ribosomal subunit protein eL21 (160 aa).

Composition is skewed to basic and acidic residues over residues 112-123 (NDQKKKEAKEKG) and 136-146 (REAHFVRTNGK). The segment at 112 to 146 (NDQKKKEAKEKGTWVQLNGQPAPPREAHFVRTNGK) is disordered.

It belongs to the eukaryotic ribosomal protein eL21 family. In terms of assembly, component of the large ribosomal subunit.

Its subcellular location is the cytoplasm. It localises to the cytosol. The protein resides in the endoplasmic reticulum. Component of the large ribosomal subunit. The ribosome is a large ribonucleoprotein complex responsible for the synthesis of proteins in the cell. In Rattus norvegicus (Rat), this protein is Large ribosomal subunit protein eL21 (Rpl21).